Consider the following 277-residue polypeptide: Phosphate import ATP-binding protein PstB 2 (277 aa).

The 242-residue stretch at 31 to 272 folds into the ABC transporter domain; sequence IEVPGLSLFY…PAKKQTEDYI (242 aa). Residue 63–70 participates in ATP binding; sequence GPSGCGKS.

This sequence belongs to the ABC transporter superfamily. Phosphate importer (TC 3.A.1.7) family. In terms of assembly, the complex is composed of two ATP-binding proteins (PstB), two transmembrane proteins (PstC and PstA) and a solute-binding protein (PstS).

It is found in the cell inner membrane. The enzyme catalyses phosphate(out) + ATP + H2O = ADP + 2 phosphate(in) + H(+). Functionally, part of the ABC transporter complex PstSACB involved in phosphate import. Responsible for energy coupling to the transport system. This Pseudomonas syringae pv. tomato (strain ATCC BAA-871 / DC3000) protein is Phosphate import ATP-binding protein PstB 2.